Here is a 307-residue protein sequence, read N- to C-terminus: Trehalose transport system permease protein SugA (307 aa).

The next 6 helical transmembrane spans lie at 25–45 (LAFM…AYPI), 89–109 (LAIT…LALV), 123–143 (AVLI…YYAW), 168–188 (LGIV…LLLL), 217–237 (ILPM…LDAF), and 272–292 (LGSA…FIFI). The ABC transmembrane type-1 domain maps to 85 to 291 (LAVTLAITAV…GCVAVIAFIF (207 aa)).

Belongs to the binding-protein-dependent transport system permease family. The complex is composed of two ATP-binding proteins (SugC), two transmembrane proteins (Suga and SugB) and a solute-binding protein (LpqY).

The protein resides in the cell inner membrane. Part of the ABC transporter complex LpqY-SugA-SugB-SugC, which is highly specific for uptake of trehalose. Involved in the recycling of extracellular trehalose released from trehalose-containing molecules synthesized by M.tuberculosis. Trehalose uptake is essential for virulence. Probably responsible for the translocation of the substrate across the membrane. This is Trehalose transport system permease protein SugA (sugA) from Mycobacterium tuberculosis (strain CDC 1551 / Oshkosh).